We begin with the raw amino-acid sequence, 83 residues long: Salivary thrombin inhibitor anophelin (83 aa).

The first 22 residues, 1–22, serve as a signal peptide directing secretion; sequence MANKLVLISLLCVVLVAKITQA. The tract at residues 25 to 51 is disordered; that stretch reads QYAPGDEPSYDEDTDDSDKLVENDTSI. N-linked (GlcNAc...) asparagine glycosylation occurs at Asn47. A sufficient for host thrombin inhibition region spans residues 54-83; that stretch reads EDYAAIEASLSETFNTAADPGRRLGEGSKP. The interval 56-62 is blocks exosite I of host thrombin; that stretch reads YAAIEAS. Residues 64-83 form a disordered region; that stretch reads SETFNTAADPGRRLGEGSKP. The blocks active site cleft of host thrombin in a reverse direction compared to substrates stretch occupies residues 72–75; that stretch reads DPGR. The span at 73–83 shows a compositional bias: basic and acidic residues; that stretch reads PGRRLGEGSKP.

It belongs to the anophelin family. In terms of assembly, interacts with human F2 (thrombin); the interaction results in thrombin inhibition. Salivary gland (at protein level).

The protein resides in the secreted. With respect to regulation, increasing concentration of NaCl decreases affinity for thrombin. Salivary protein with anticoagulant activity that inhibits host thrombin (F2); binds to the proteinase in a reverse orientation (opposite to substrates). Inhibits thrombin-induced platelet aggregation. This chain is Salivary thrombin inhibitor anophelin, found in Anopheles albimanus (New world malaria mosquito).